A 307-amino-acid polypeptide reads, in one-letter code: NAD kinase (307 aa).

The Proton acceptor role is filled by D85. NAD(+) contacts are provided by residues 85–86 (DG), R90, 159–160 (NE), D189, and 200–205 (TAYAFS).

The protein belongs to the NAD kinase family. The cofactor is a divalent metal cation.

The protein localises to the cytoplasm. It carries out the reaction NAD(+) + ATP = ADP + NADP(+) + H(+). Its function is as follows. Involved in the regulation of the intracellular balance of NAD and NADP, and is a key enzyme in the biosynthesis of NADP. Catalyzes specifically the phosphorylation on 2'-hydroxyl of the adenosine moiety of NAD to yield NADP. The sequence is that of NAD kinase from Mycobacterium bovis (strain ATCC BAA-935 / AF2122/97).